A 217-amino-acid chain; its full sequence is 3,4-dihydroxy-2-butanone 4-phosphate synthase (217 aa).

D-ribulose 5-phosphate-binding positions include 37-38 (RE), Asp42, 150-154 (RRGHT), and Glu174. Position 38 (Glu38) interacts with Mg(2+). Residue His153 coordinates Mg(2+).

The protein belongs to the DHBP synthase family. As to quaternary structure, homodimer. Mg(2+) serves as cofactor. Requires Mn(2+) as cofactor.

It catalyses the reaction D-ribulose 5-phosphate = (2S)-2-hydroxy-3-oxobutyl phosphate + formate + H(+). Its pathway is cofactor biosynthesis; riboflavin biosynthesis; 2-hydroxy-3-oxobutyl phosphate from D-ribulose 5-phosphate: step 1/1. Functionally, catalyzes the conversion of D-ribulose 5-phosphate to formate and 3,4-dihydroxy-2-butanone 4-phosphate. This is 3,4-dihydroxy-2-butanone 4-phosphate synthase from Shewanella sp. (strain MR-4).